A 336-amino-acid chain; its full sequence is Flagellar filament 41 kDa core protein (336 aa).

The tract at residues 208–236 is disordered; sequence AAPVQEGVQQEGAQQPAPATAPSQGGVNS. Residues 210–233 show a composition bias toward low complexity; that stretch reads PVQEGVQQEGAQQPAPATAPSQGG.

The protein belongs to the bacterial flagellin family. The flagellum consists of an outer layer composed of repeating units of FlaA around a core that contains several antigenically related polypeptides.

It is found in the periplasmic flagellum. It localises to the periplasm. Its function is as follows. Component of the core of the flagella. The chain is Flagellar filament 41 kDa core protein (fla) from Borreliella burgdorferi (strain ATCC 35210 / DSM 4680 / CIP 102532 / B31) (Borrelia burgdorferi).